The sequence spans 212 residues: Adenylate kinase (212 aa).

10-15 (GAGKGT) provides a ligand contact to ATP. The NMP stretch occupies residues 30 to 59 (STGDMFRAAIANQTEMGVLAKSYIDKGELV). Residues Thr-31, Arg-36, 57–59 (ELV), 86–89 (GYPR), and Gln-93 contribute to the AMP site. Residues 127-159 (GRIIHRETGETFHKVFNPPADYKEEDYYQREDD) form an LID region. ATP-binding positions include Arg-128 and 137–138 (TF). AMP-binding residues include Arg-156 and Arg-167. Gln-195 contributes to the ATP binding site.

Belongs to the adenylate kinase family. Monomer.

It is found in the cytoplasm. The enzyme catalyses AMP + ATP = 2 ADP. The protein operates within purine metabolism; AMP biosynthesis via salvage pathway; AMP from ADP: step 1/1. Its function is as follows. Catalyzes the reversible transfer of the terminal phosphate group between ATP and AMP. Plays an important role in cellular energy homeostasis and in adenine nucleotide metabolism. The chain is Adenylate kinase from Streptococcus sanguinis (strain SK36).